Reading from the N-terminus, the 1038-residue chain is MSHSIPITSSPPPALKKLKLPNGSEEPSEFERELLDITQAVHDSTDQTWDRPPLPSSFEDISFQQLDAEEYHDRGNTYARFFGITQEGHSVLCNVTGFIHYFYCPVPKGFEENLTEFTNYLKATFDGIERVEITSKESIWGYSNNIKTPFFKIFAKNNISKIRSAFQNGQVHNIDPCITYDNINYLLRLMIDCKITGMSWITLPRDKYKIVNNKISTCQIECSIDYRDLISHPPEGEWLKMAPLRILSFDIECAGRKGVFPEAEHDPVIQIANVVQKSGESKPFVRNVFTVNTCSSIIGSQIFEHQREEDMLMHWKEFITKVDPDVIIGYNTANFDIPYVLNRAKALGLNDFPFFGRLKRVKQEIKDAVFSSRAYGTRENKVVNIDGRMQLDLLQFIQREYKLRSYTLNSVSAHFLGEQKEDVQHSIITDLQNGTKETRRRLAVYCLKDAFLPLRLLDKLMCLVNYTEMARVTGVPFSYLLSRGQQIKVISQLFRKCLQEDIVIPNLKSEGSNEEYEGATVIEPERGYYDVPIATLDFSSLYPSIMMAHNLCYTTLLNKNSIKAFGLTEDDYTKTPNGDYFVHSNLRKGILPTILDELLTARKKAKADLKKETDPFKKDVLNGRQLALKISANSVYGFTGATVGKLPCLAISSSVTAFGREMIEKTKNEVQEYYSKKNGHPYDAKVIYGDTDSVMVKFGYQDLETCMKLGEEAANYVSTKFKNPIKLEFEKVYFPYLLINKKRYAGLYWTRPEKFDKMDTKGIETVRRDNCRLVQNVITKVLEFILEERDVPKAQRFVKQTIADLLQNRIDLSQLVITKAYSKHDYSAKQAHVELAERMRKRDPGSAPTLGDRVAYVIIKTGGDKNYEKSEDPLYVLENSLPIDVKYYLDQQLTKPLERIFIPILGETKTKELLTGSHTRTIKVAAPKTGGLLRFAKKSEVCVSCRTPLKKDNLGALCPNCIKDGKGPDLYGNALSQMNYLENKFSRLWTECQRCQGSLHQEVLCSNKDCPIFYMRTKAQKDVHQQALELVKWDNTNW.

The disordered stretch occupies residues 1-29; sequence MSHSIPITSSPPPALKKLKLPNGSEEPSE. Residues C942, C945, C958, and C961 each contribute to the Zn(2+) site. The CysA-type zinc-finger motif lies at 942-961; the sequence is CVSCRTPLKKDNLGALCPNC. Residues C992, C995, C1005, and C1010 each contribute to the [4Fe-4S] cluster site. The CysB motif motif lies at 992 to 1010; the sequence is CQRCQGSLHQEVLCSNKDC.

Belongs to the DNA polymerase type-B family. Heterodimer with subunits of 125 kDa and 50 kDa. The 125 kDa subunit contains the polymerase active site and most likely the active site for the 3'-5' exonuclease activity. [4Fe-4S] cluster is required as a cofactor.

Its subcellular location is the nucleus. It carries out the reaction DNA(n) + a 2'-deoxyribonucleoside 5'-triphosphate = DNA(n+1) + diphosphate. Its function is as follows. This polymerase possesses two enzymatic activities: DNA synthesis (polymerase) and an exonucleolytic activity that degrades single-stranded DNA in the 3'- to 5'-direction. This Candida albicans (Yeast) protein is DNA polymerase delta catalytic subunit (POL3).